The following is a 435-amino-acid chain: Methylenetetrahydrofolate--tRNA-(uracil-5-)-methyltransferase TrmFO (435 aa).

9 to 14 provides a ligand contact to FAD; that stretch reads GAGLAG.

Belongs to the MnmG family. TrmFO subfamily. Requires FAD as cofactor.

The protein localises to the cytoplasm. It catalyses the reaction uridine(54) in tRNA + (6R)-5,10-methylene-5,6,7,8-tetrahydrofolate + NADH + H(+) = 5-methyluridine(54) in tRNA + (6S)-5,6,7,8-tetrahydrofolate + NAD(+). It carries out the reaction uridine(54) in tRNA + (6R)-5,10-methylene-5,6,7,8-tetrahydrofolate + NADPH + H(+) = 5-methyluridine(54) in tRNA + (6S)-5,6,7,8-tetrahydrofolate + NADP(+). Catalyzes the folate-dependent formation of 5-methyl-uridine at position 54 (M-5-U54) in all tRNAs. This chain is Methylenetetrahydrofolate--tRNA-(uracil-5-)-methyltransferase TrmFO, found in Enterococcus faecalis (strain ATCC 700802 / V583).